A 221-amino-acid polypeptide reads, in one-letter code: PKHD-type hydroxylase Pro_1271 (221 aa).

The Fe2OG dioxygenase domain occupies 80-174 (KVHGVMFSKS…RIVCVGWIQS (95 aa)). Positions 98, 100, and 155 each coordinate Fe cation. R165 contacts 2-oxoglutarate.

Fe(2+) is required as a cofactor. Requires L-ascorbate as cofactor.

The protein is PKHD-type hydroxylase Pro_1271 of Prochlorococcus marinus (strain SARG / CCMP1375 / SS120).